The following is a 199-amino-acid chain: N-(5'-phosphoribosyl)anthranilate isomerase (199 aa).

The protein belongs to the TrpF family.

The enzyme catalyses N-(5-phospho-beta-D-ribosyl)anthranilate = 1-(2-carboxyphenylamino)-1-deoxy-D-ribulose 5-phosphate. It participates in amino-acid biosynthesis; L-tryptophan biosynthesis; L-tryptophan from chorismate: step 3/5. The polypeptide is N-(5'-phosphoribosyl)anthranilate isomerase (Clostridium kluyveri (strain NBRC 12016)).